The following is a 374-amino-acid chain: Putative glutamate--cysteine ligase 2 (374 aa).

This sequence belongs to the glutamate--cysteine ligase type 2 family. YbdK subfamily.

It catalyses the reaction L-cysteine + L-glutamate + ATP = gamma-L-glutamyl-L-cysteine + ADP + phosphate + H(+). In terms of biological role, ATP-dependent carboxylate-amine ligase which exhibits weak glutamate--cysteine ligase activity. This Acidovorax sp. (strain JS42) protein is Putative glutamate--cysteine ligase 2.